The primary structure comprises 214 residues: ATP-dependent Clp protease proteolytic subunit (214 aa).

Residue serine 110 is the Nucleophile of the active site. Histidine 135 is a catalytic residue.

Belongs to the peptidase S14 family. In terms of assembly, fourteen ClpP subunits assemble into 2 heptameric rings which stack back to back to give a disk-like structure with a central cavity, resembling the structure of eukaryotic proteasomes.

It is found in the cytoplasm. The enzyme catalyses Hydrolysis of proteins to small peptides in the presence of ATP and magnesium. alpha-casein is the usual test substrate. In the absence of ATP, only oligopeptides shorter than five residues are hydrolyzed (such as succinyl-Leu-Tyr-|-NHMec, and Leu-Tyr-Leu-|-Tyr-Trp, in which cleavage of the -Tyr-|-Leu- and -Tyr-|-Trp bonds also occurs).. Functionally, cleaves peptides in various proteins in a process that requires ATP hydrolysis. Has a chymotrypsin-like activity. Plays a major role in the degradation of misfolded proteins. This is ATP-dependent Clp protease proteolytic subunit from Legionella pneumophila (strain Paris).